The chain runs to 182 residues: Large ribosomal subunit protein uL5 (182 aa).

Belongs to the universal ribosomal protein uL5 family. As to quaternary structure, part of the 50S ribosomal subunit; part of the 5S rRNA/L5/L18/L25 subcomplex. Contacts the 5S rRNA and the P site tRNA. Forms a bridge to the 30S subunit in the 70S ribosome.

This is one of the proteins that bind and probably mediate the attachment of the 5S RNA into the large ribosomal subunit, where it forms part of the central protuberance. In the 70S ribosome it contacts protein S13 of the 30S subunit (bridge B1b), connecting the 2 subunits; this bridge is implicated in subunit movement. Contacts the P site tRNA; the 5S rRNA and some of its associated proteins might help stabilize positioning of ribosome-bound tRNAs. The sequence is that of Large ribosomal subunit protein uL5 from Borrelia hermsii (strain HS1 / DAH).